The following is a 194-amino-acid chain: Ribonuclease HII (194 aa).

In terms of domain architecture, RNase H type-2 spans 3–193; that stretch reads ILTAGVDEAG…VRNLLAQQAL (191 aa). Asp9, Glu10, and Asp101 together coordinate a divalent metal cation.

It belongs to the RNase HII family. It depends on Mn(2+) as a cofactor. Mg(2+) is required as a cofactor.

The protein resides in the cytoplasm. It carries out the reaction Endonucleolytic cleavage to 5'-phosphomonoester.. Endonuclease that specifically degrades the RNA of RNA-DNA hybrids. The chain is Ribonuclease HII (rnhB) from Neisseria meningitidis serogroup A / serotype 4A (strain DSM 15465 / Z2491).